The sequence spans 264 residues: tRNA pseudouridine synthase A (264 aa).

Catalysis depends on aspartate 51, which acts as the Nucleophile. Tyrosine 109 is a substrate binding site.

The protein belongs to the tRNA pseudouridine synthase TruA family. In terms of assembly, homodimer.

It carries out the reaction uridine(38/39/40) in tRNA = pseudouridine(38/39/40) in tRNA. Its function is as follows. Formation of pseudouridine at positions 38, 39 and 40 in the anticodon stem and loop of transfer RNAs. The sequence is that of tRNA pseudouridine synthase A from Vibrio atlanticus (strain LGP32) (Vibrio splendidus (strain Mel32)).